Here is a 398-residue protein sequence, read N- to C-terminus: Mannitol-1-phosphate 5-dehydrogenase (398 aa).

10–21 provides a ligand contact to NAD(+); that stretch reads AVHFGAGNIGRG. Residue Lys-221 is part of the active site.

This sequence belongs to the mannitol dehydrogenase family. In terms of assembly, monomer.

It carries out the reaction D-mannitol 1-phosphate + NAD(+) = beta-D-fructose 6-phosphate + NADH + H(+). Its function is as follows. Catalyzes the NAD(H)-dependent interconversion of D-fructose 6-phosphate and D-mannitol 1-phosphate in the mannitol metabolic pathway. The polypeptide is Mannitol-1-phosphate 5-dehydrogenase (Chaetomium globosum (strain ATCC 6205 / CBS 148.51 / DSM 1962 / NBRC 6347 / NRRL 1970) (Soil fungus)).